The following is a 143-amino-acid chain: Large ribosomal subunit protein uL13 (143 aa).

This sequence belongs to the universal ribosomal protein uL13 family. As to quaternary structure, part of the 50S ribosomal subunit.

Its function is as follows. This protein is one of the early assembly proteins of the 50S ribosomal subunit, although it is not seen to bind rRNA by itself. It is important during the early stages of 50S assembly. This Natranaerobius thermophilus (strain ATCC BAA-1301 / DSM 18059 / JW/NM-WN-LF) protein is Large ribosomal subunit protein uL13.